The primary structure comprises 324 residues: Glyoxylate/hydroxypyruvate reductase B (324 aa).

Catalysis depends on residues arginine 237 and glutamate 266. Histidine 285 (proton donor) is an active-site residue.

This sequence belongs to the D-isomer specific 2-hydroxyacid dehydrogenase family. GhrB subfamily. Homodimer.

It is found in the cytoplasm. It catalyses the reaction glycolate + NADP(+) = glyoxylate + NADPH + H(+). It carries out the reaction (R)-glycerate + NAD(+) = 3-hydroxypyruvate + NADH + H(+). The enzyme catalyses (R)-glycerate + NADP(+) = 3-hydroxypyruvate + NADPH + H(+). Functionally, catalyzes the NADPH-dependent reduction of glyoxylate and hydroxypyruvate into glycolate and glycerate, respectively. The polypeptide is Glyoxylate/hydroxypyruvate reductase B (Escherichia coli O6:K15:H31 (strain 536 / UPEC)).